A 478-amino-acid chain; its full sequence is Proline--tRNA ligase (478 aa).

This sequence belongs to the class-II aminoacyl-tRNA synthetase family. ProS type 3 subfamily. In terms of assembly, homodimer.

It localises to the cytoplasm. It catalyses the reaction tRNA(Pro) + L-proline + ATP = L-prolyl-tRNA(Pro) + AMP + diphosphate. Functionally, catalyzes the attachment of proline to tRNA(Pro) in a two-step reaction: proline is first activated by ATP to form Pro-AMP and then transferred to the acceptor end of tRNA(Pro). The sequence is that of Proline--tRNA ligase from Methanococcoides burtonii (strain DSM 6242 / NBRC 107633 / OCM 468 / ACE-M).